Consider the following 377-residue polypeptide: MQTSPDLTSARSVIRLLLFAKSRAVVAELEEHLRQHIQGLPGQYPAQLEVVPLEEHPYLAEHYKLVATPALVKAEPLPAQVLAGADLATQLEVWWPRWQGQAALAAHQEGAGRDPASPPTTEALLQMSEEVFLLRQERAQLREQLDFKDRVLAMLVHDLRSPLTATALAVETLQQGREGSLDKALERQLFDHARQQLRKMDSMITDILESARGAASELRIRAVETQLPGLCQAVIEELWPRIQGKRLQFQADIPVDLPSVHVDPDKIRQVLFNLLDNAIKYTPAGGSIRLDVLHRTSQKVQVTVSDTGPGIPEADQESIFSDSVRLSRDQQQEGYGIGLSLCRRIVRAHYGQIWVESSLGKGSSFHFTLPVYRLCKR.

One can recognise a Histidine kinase domain in the interval 154–373 (MLVHDLRSPL…SFHFTLPVYR (220 aa)). His-157 is subject to Phosphohistidine; by autocatalysis.

As to quaternary structure, homooligomerizes. Interacts with KaiC. Participates in the KaiABC clock complex, whose core is composed of a KaiC homohexamer, 6 KaiB and up to 6 KaiA dimers. SasA and KaiB(fs) compete to bind to KaiC.

It catalyses the reaction ATP + protein L-histidine = ADP + protein N-phospho-L-histidine.. Member of the two-component regulatory system SasA/RpaA involved in genome-wide circadian gene expression. One of several clock output pathways. Participates in the Kai clock protein complex, the main circadian regulator in cyanobacteria, via its interaction with KaiC. KaiC enhances the autophosphorylation activity of SasA, which then transfers its phosphate group to RpaA to activate it. In addition to its output function, recruits fold-shifted KaiB (KaiB(fs)) to KaiC to cooperatively form the KaiB(6):KaiC(6) complex (independent of SasA kinase activity). Required for robustness of the circadian rhythm of gene expression and is involved in clock output, also required for adaptation to light/dark cycles. This Synechococcus sp. (strain JA-2-3B'a(2-13)) (Cyanobacteria bacterium Yellowstone B-Prime) protein is Adaptive-response sensory kinase SasA.